Reading from the N-terminus, the 479-residue chain is Ribulose bisphosphate carboxylase large chain (479 aa).

A propeptide spanning residues 1–2 (MS) is cleaved from the precursor. Substrate is bound by residues Asn123 and Thr173. Lys175 serves as the catalytic Proton acceptor. Lys177 serves as a coordination point for substrate. Mg(2+) contacts are provided by Lys201, Asp203, and Glu204. Lys201 is subject to N6-carboxylysine. The residue at position 208 (Ser208) is a Phosphoserine. Residue His294 is the Proton acceptor of the active site. Substrate is bound by residues Arg295 and His327. Thr330 is modified (phosphothreonine). Residue Ser379 coordinates substrate.

The protein belongs to the RuBisCO large chain family. Type I subfamily. Heterohexadecamer of 8 large chains and 8 small chains; disulfide-linked. The disulfide link is formed within the large subunit homodimers. Mg(2+) is required as a cofactor. In terms of processing, the disulfide bond which can form in the large chain dimeric partners within the hexadecamer appears to be associated with oxidative stress and protein turnover.

The protein localises to the plastid. Its subcellular location is the chloroplast. The enzyme catalyses 2 (2R)-3-phosphoglycerate + 2 H(+) = D-ribulose 1,5-bisphosphate + CO2 + H2O. It carries out the reaction D-ribulose 1,5-bisphosphate + O2 = 2-phosphoglycolate + (2R)-3-phosphoglycerate + 2 H(+). Functionally, ruBisCO catalyzes two reactions: the carboxylation of D-ribulose 1,5-bisphosphate, the primary event in carbon dioxide fixation, as well as the oxidative fragmentation of the pentose substrate in the photorespiration process. Both reactions occur simultaneously and in competition at the same active site. This is Ribulose bisphosphate carboxylase large chain from Nasturtium officinale (Watercress).